The following is a 180-amino-acid chain: Beta-lactoglobulin-1/B (180 aa).

An N-terminal signal peptide occupies residues 1–18 (MKCLLLALGLALACGVQA). Intrachain disulfides connect cysteine 84-cysteine 178, cysteine 124-cysteine 137, and cysteine 124-cysteine 139.

Belongs to the calycin superfamily. Lipocalin family. In terms of assembly, under physiological conditions beta-lactoglobulin exists as an equilibrium mixture of monomeric and dimeric forms. Post-translationally, alternate disulfide bonds occur in equal amounts.

The protein resides in the secreted. In terms of biological role, lactoglobulin is the primary component of whey, it binds retinol and is probably involved in the transport of that molecule. This is Beta-lactoglobulin-1/B from Ovis aries (Sheep).